Consider the following 63-residue polypeptide: 2-hydroxymuconate tautomerase (63 aa).

The active-site Proton acceptor; via imino nitrogen is proline 2.

Belongs to the 4-oxalocrotonate tautomerase family. In terms of assembly, homohexamer.

It catalyses the reaction (2Z,4E)-2-hydroxyhexa-2,4-dienedioate = (3E)-2-oxohex-3-enedioate. It functions in the pathway aromatic compound metabolism; salicylate degradation. Functionally, catalyzes the ketonization of 2-hydroxymuconate stereoselectively to yield 2-oxo-3-hexenedioate. The sequence is that of 2-hydroxymuconate tautomerase (tdnL) from Pseudomonas putida (Arthrobacter siderocapsulatus).